We begin with the raw amino-acid sequence, 187 residues long: Peptidoglycan-recognition protein 3 (187 aa).

Residues 1-19 form the signal peptide; the sequence is MKAFLVALLISIELALVFA. 2 cysteine pairs are disulfide-bonded: cysteine 21-cysteine 144 and cysteine 58-cysteine 64. The N-acetylmuramoyl-L-alanine amidase domain maps to 43–170; sequence KPLKYVIINH…RTIRQTNSPG (128 aa). Asparagine 51 carries N-linked (GlcNAc...) asparagine glycosylation.

The protein belongs to the N-acetylmuramoyl-L-alanine amidase 2 family.

Its subcellular location is the secreted. Functionally, peptidoglycan-recognition protein probably involved in innate immunity by binding to peptidoglycans (PGN) of bacteria and activating the prophenoloxidase (proPO) cascade immune response. Binds to 1,3-beta-D-glucan and PGN. This chain is Peptidoglycan-recognition protein 3 (PGRP-3), found in Holotrichia diomphalia (Korean black chafer).